Consider the following 229-residue polypeptide: Biosynthetic peptidoglycan transglycosylase (229 aa).

Residues 10–30 (LLLALVLVVLYQFWIFMHILW) form a helical membrane-spanning segment.

This sequence belongs to the glycosyltransferase 51 family.

The protein localises to the cell inner membrane. The catalysed reaction is [GlcNAc-(1-&gt;4)-Mur2Ac(oyl-L-Ala-gamma-D-Glu-L-Lys-D-Ala-D-Ala)](n)-di-trans,octa-cis-undecaprenyl diphosphate + beta-D-GlcNAc-(1-&gt;4)-Mur2Ac(oyl-L-Ala-gamma-D-Glu-L-Lys-D-Ala-D-Ala)-di-trans,octa-cis-undecaprenyl diphosphate = [GlcNAc-(1-&gt;4)-Mur2Ac(oyl-L-Ala-gamma-D-Glu-L-Lys-D-Ala-D-Ala)](n+1)-di-trans,octa-cis-undecaprenyl diphosphate + di-trans,octa-cis-undecaprenyl diphosphate + H(+). The protein operates within cell wall biogenesis; peptidoglycan biosynthesis. Peptidoglycan polymerase that catalyzes glycan chain elongation from lipid-linked precursors. This is Biosynthetic peptidoglycan transglycosylase from Methylobacillus flagellatus (strain ATCC 51484 / DSM 6875 / VKM B-1610 / KT).